Consider the following 510-residue polypeptide: Cytochrome P450 monooxygenase ptmK (510 aa).

The chain crosses the membrane as a helical span at residues 2-22 (IIVTFFWVGIVLSAIWTFYKV). 3 N-linked (GlcNAc...) asparagine glycosylation sites follow: asparagine 313, asparagine 408, and asparagine 443. Residue cysteine 456 coordinates heme.

This sequence belongs to the cytochrome P450 family. The cofactor is heme.

It is found in the membrane. Its pathway is secondary metabolite biosynthesis. Functionally, cytochrome P450 monooxygenase; part of the gene cluster that mediates the biosynthesis of the indole diterpenes penitrems. The geranylgeranyl diphosphate (GGPP) synthase ptmG catalyzes the first step in penitrem biosynthesis via conversion of farnesyl pyrophosphate and isopentyl pyrophosphate into geranylgeranyl pyrophosphate (GGPP). Condensation of indole-3-glycerol phosphate with GGPP by the prenyl transferase ptmC then forms 3-geranylgeranylindole (3-GGI). Epoxidation by the FAD-dependent monooxygenase ptmM leads to a epoxidized-GGI that is substrate of the terpene cyclase ptmB for cyclization to yield paspaline. Paspaline is subsequently converted to 13-desoxypaxilline by the cytochrome P450 monooxygenase ptmP, the latter being then converted to paxilline by the cytochrome P450 monooxygenase ptmQ. Paxilline is converted to beta-paxitriol via C-10 ketoreduction by the short-chain dehydrogenase ptmH which can be monoprenylated at the C-20 by the indole diterpene prenyltransferase ptmD. A two-step elimination (acetylation and elimination) process performed by the O-acetyltransferase ptmV and ptmI leads to the production of the prenylated form of penijanthine. The FAD-linked oxidoreductase ptmO then converts the prenylated form of penijanthine into PC-M5 which is in turn transformed into PC-M4 by the aromatic dimethylallyltransferase ptmE. Five sequential oxidative transformations performed by the cytochrome P450 monooxygenases ptmK, ptmU, ptmL, ptmN and ptmJ yield the various penitrem compounds. PtmK, ptmU and ptmM are involved in the formation of the key bicyclic ring of penitrem C via the formation of the intermediates secopenitrem D and penitrem D. PtmL catalyzes the epoxidation of penitrem D and C to yield penitrem B and F, respectively. PtmJ catalyzes the last benzylic hydroxylation to convert penitrem B to prenitrem E and penitrem F to penitrem A. The sequence is that of Cytochrome P450 monooxygenase ptmK from Penicillium ochrochloron.